We begin with the raw amino-acid sequence, 468 residues long: Cyclin-dependent kinase 14 (468 aa).

A phosphoserine mark is found at Ser-24, Ser-77, and Ser-94. The interval Phe-102–Ala-131 is disordered. Position 133 is a phosphoserine (Ser-133). The Protein kinase domain maps to Tyr-134–Phe-418. Residues Leu-140–Val-148 and Lys-163 each bind ATP. The Proton acceptor role is filled by Asp-255. The tract at residues Glu-448–His-468 is disordered. Residues Lys-455–His-468 are compositionally biased toward polar residues.

Belongs to the protein kinase superfamily. CMGC Ser/Thr protein kinase family. CDC2/CDKX subfamily. Found in a complex with LRP6, CCNY and CAPRIN2 during G2/M stage; CAPRIN2 functions as a scaffold for the complex by binding to CCNY via its N terminus and to CDK14 via its C terminus. Interacts with CCNY; CCNY mediates its recruitment to the plasma membrane and promotes phosphorylation of LRP6. Interacts with CCDN3 and CDKN1A. Interacts with SEPT8. Interacts with 14-3-3 proteina YWHAB, YWHAE, YWHAH and YWHAQ.

It is found in the cell membrane. The protein resides in the cytoplasm. Its subcellular location is the nucleus. The catalysed reaction is L-seryl-[protein] + ATP = O-phospho-L-seryl-[protein] + ADP + H(+). It carries out the reaction L-threonyl-[protein] + ATP = O-phospho-L-threonyl-[protein] + ADP + H(+). With respect to regulation, serine/threonine-protein kinase activity is promoted by associated cyclins CCDN3 and CCNY and repressed by CDKN1A. In terms of biological role, serine/threonine-protein kinase involved in the control of the eukaryotic cell cycle, whose activity is controlled by an associated cyclin. Acts as a cell-cycle regulator of Wnt signaling pathway during G2/M phase by mediating the phosphorylation of LRP6 at 'Ser-1490', leading to the activation of the Wnt signaling pathway. Acts as a regulator of cell cycle progression and cell proliferation via its interaction with CCDN3. Phosphorylates RB1 in vitro, however the relevance of such result remains to be confirmed in vivo. May also play a role in meiosis, neuron differentiation and may indirectly act as a negative regulator of insulin-responsive glucose transport. This is Cyclin-dependent kinase 14 (CDK14) from Oryctolagus cuniculus (Rabbit).